A 639-amino-acid polypeptide reads, in one-letter code: MISYGENLGGRAVSPLPVRGGHMMHGAAFAYVPSPQVLHRIPGTSAYGFPSVGPMALPEHGCPYGEVVEHHDPLPAKLALEDERKPEPGLIQKLRRAGVTLLKVPLMLSFLYLFVCSLDVLSSAFQLAGGKVAGDIFKDNAILSNPVAGLVVGILVTVLVQSSSTSTSIVVSMVSSGLLEVSSAIPIIMGSNIGTSVTNTIVALMQAGDRTDFRRAFAGATVHDCFNWLSVLVLLPLEAATGYLHHITRLVVASFNIRGGRDAPDLLKIITEPFTKLIIQLDKSVITSLASGDESLRNHSLIRVWCYPNPTEVPTPMPRAEANTSRMLRNATLEKCNHIFVDTGLPDLAVGLILLAGSLALLCTCLILLVKMLNSLLKGQVAKVIQKVINTDFPTPFTWATGYFAMVVGASMTFVVQSSSVFTSAITPLIGLGVISIERAYPLTLGSNIGTTTTAILAALASPREKLSSAFQIALCHFFFNISGILLWYPVPCTRLPIRMAKALGKRTAKYRWFAVLYLLLCFLLLPSMVFGLSMAGWRAMVGVGAPFGALLAFVVLVSALQHRSPGCLPKWLQTWDFLPLWVHSLKPLDHLITRATLCCARPEPRSPPLPTRVFLEELPPATPSPRLAMPHHHDATRL.

The Cytoplasmic segment spans residues 1–103 (MISYGENLGG…LRRAGVTLLK (103 aa)). Residues S14 and S34 each carry the phosphoserine modification. A helical membrane pass occupies residues 104–125 (VPLMLSFLYLFVCSLDVLSSAF). Over 126–145 (QLAGGKVAGDIFKDNAILSN) the chain is Extracellular. The chain crosses the membrane as a helical span at residues 146 to 163 (PVAGLVVGILVTVLVQSS). At 164-165 (ST) the chain is on the cytoplasmic side. Residues 166-185 (STSIVVSMVSSGLLEVSSAI) traverse the membrane as a helical segment. Topologically, residues 186-347 (PIIMGSNIGT…HIFVDTGLPD (162 aa)) are extracellular. 2 cysteine pairs are disulfide-bonded: C225–C522 and C306–C336. 3 N-linked (GlcNAc...) asparagine glycosylation sites follow: N298, N323, and N330. Residues 348 to 370 (LAVGLILLAGSLALLCTCLILLV) traverse the membrane as a helical segment. Residues 371–412 (KMLNSLLKGQVAKVIQKVINTDFPTPFTWATGYFAMVVGASM) are Cytoplasmic-facing. The chain crosses the membrane as a helical span at residues 413–436 (TFVVQSSSVFTSAITPLIGLGVIS). The Extracellular segment spans residues 437 to 466 (IERAYPLTLGSNIGTTTTAILAALASPREK). Residues 467–487 (LSSAFQIALCHFFFNISGILL) form a helical membrane-spanning segment. The Cytoplasmic segment spans residues 488–513 (WYPVPCTRLPIRMAKALGKRTAKYRW). The residue at position 508 (T508) is a Phosphothreonine; by PKC. A helical membrane pass occupies residues 514 to 534 (FAVLYLLLCFLLLPSMVFGLS). Residues 535–539 (MAGWR) are Extracellular-facing. The chain crosses the membrane as a helical span at residues 540–561 (AMVGVGAPFGALLAFVVLVSAL). The Cytoplasmic segment spans residues 562 to 639 (QHRSPGCLPK…MPHHHDATRL (78 aa)). Phosphoserine is present on S607. T623 bears the Phosphothreonine mark. Phosphoserine is present on S625.

It belongs to the SLC34A transporter family. Interacts via its C-terminal region with NHERF4. Interacts with NHERF1. Interacts with TMEM174; regulates SLC34A1 internalization by PTH and FGF23.

The protein localises to the apical cell membrane. The protein resides in the cell membrane. The enzyme catalyses 3 Na(+)(out) + phosphate(out) = 3 Na(+)(in) + phosphate(in). Its function is as follows. Involved in actively transporting phosphate into cells via Na(+) cotransport in the renal brush border membrane. The cotransport has a Na(+):Pi stoichiometry of 3:1 and is electrogenic. This Ovis aries (Sheep) protein is Sodium-dependent phosphate transport protein 2A.